The primary structure comprises 101 residues: NADH-quinone oxidoreductase subunit K (101 aa).

The next 3 membrane-spanning stretches (helical) occupy residues 4–24 (LGHL…GIFL), 30–50 (IVLL…FIAF), and 62–82 (FVFF…AILV).

Belongs to the complex I subunit 4L family. As to quaternary structure, NDH-1 is composed of 14 different subunits. Subunits NuoA, H, J, K, L, M, N constitute the membrane sector of the complex.

The protein resides in the cell inner membrane. It carries out the reaction a quinone + NADH + 5 H(+)(in) = a quinol + NAD(+) + 4 H(+)(out). Functionally, NDH-1 shuttles electrons from NADH, via FMN and iron-sulfur (Fe-S) centers, to quinones in the respiratory chain. The immediate electron acceptor for the enzyme in this species is believed to be ubiquinone. Couples the redox reaction to proton translocation (for every two electrons transferred, four hydrogen ions are translocated across the cytoplasmic membrane), and thus conserves the redox energy in a proton gradient. The chain is NADH-quinone oxidoreductase subunit K from Xylella fastidiosa (strain 9a5c).